A 203-amino-acid polypeptide reads, in one-letter code: Large ribosomal subunit protein uL22 (203 aa).

Composition is skewed to polar residues over residues 116 to 126 (QNGGESQNQEY) and 134 to 167 (VSKS…DSQL). The segment at 116 to 203 (QNGGESQNQE…TVLAQEKEVK (88 aa)) is disordered. The span at 168–194 (SAKTNSTTTAKKTDLADNNTKNDATNT) shows a compositional bias: low complexity.

It belongs to the universal ribosomal protein uL22 family. Part of the 50S ribosomal subunit.

In terms of biological role, this protein binds specifically to 23S rRNA; its binding is stimulated by other ribosomal proteins, e.g. L4, L17, and L20. It is important during the early stages of 50S assembly. It makes multiple contacts with different domains of the 23S rRNA in the assembled 50S subunit and ribosome. Functionally, the globular domain of the protein is located near the polypeptide exit tunnel on the outside of the subunit, while an extended beta-hairpin is found that lines the wall of the exit tunnel in the center of the 70S ribosome. In Mesomycoplasma hyopneumoniae (strain 232) (Mycoplasma hyopneumoniae), this protein is Large ribosomal subunit protein uL22.